We begin with the raw amino-acid sequence, 92 residues long: Small ribosomal subunit protein uS19c (92 aa).

It belongs to the universal ribosomal protein uS19 family.

The protein localises to the plastid. It is found in the chloroplast. Functionally, protein S19 forms a complex with S13 that binds strongly to the 16S ribosomal RNA. This chain is Small ribosomal subunit protein uS19c (rps19), found in Glycine max (Soybean).